The following is a 508-amino-acid chain: MGLPWYRVHTVVLNDPGRLLAVHIMHTALVAGWAGSMALYELAVFDPSDPVLDPMWRQGMFVIPFMTRLGITNSWGGWNITGGTITNPGIWSYEGVAGAHIVFSGLCFLAAIWHWVYWDLEIFSDERTGKPSLDLPKIFGIHLFLAGLACFGFGAFHVTGLYGPGIWVSDPYGLTGRVQPVNPAWGVEGFDPFVPGGVASHHIAAGTLGILAGLFHLSVRPPQRLYKGLRMGNIETVLSSSIAAVFFAAFVVAGTMWYGSATTPIELFGPTRYQWDQGYFQQEIYRRVGAGLAENQSFSEAWSKIPEKLAFYDYIGNNPAKGGLFRAGSMDNGDGIAVGWLGHPIFRDKEGRELFVRRMPTFFETFPVVLVDGDGIVRADVPFRRAESKYSVEQVGVTVEFYGGELNGVSYSDPATVKKYARRAQLGEIFELDRATLKSDGVFRSSPRGWFTFGHASFALLFFFGHIWHGSRTLFRDVFAGIDPDLDSQVEFGAFQKLGDPTTRRQVV.

6 helical membrane passes run 21–36 (AVHI…WAGS), 101–115 (IVFS…IWHW), 140–156 (GIHL…FGAF), 203–218 (IAAG…FHLS), 237–252 (VLSS…AFVV), and 457–472 (SFAL…HGSR).

Belongs to the PsbB/PsbC family. PsbB subfamily. PSII is composed of 1 copy each of membrane proteins PsbA, PsbB, PsbC, PsbD, PsbE, PsbF, PsbH, PsbI, PsbJ, PsbK, PsbL, PsbM, PsbT, PsbX, PsbY, PsbZ, Psb30/Ycf12, at least 3 peripheral proteins of the oxygen-evolving complex and a large number of cofactors. It forms dimeric complexes. The cofactor is Binds multiple chlorophylls. PSII binds additional chlorophylls, carotenoids and specific lipids..

It localises to the plastid. It is found in the chloroplast thylakoid membrane. Functionally, one of the components of the core complex of photosystem II (PSII). It binds chlorophyll and helps catalyze the primary light-induced photochemical processes of PSII. PSII is a light-driven water:plastoquinone oxidoreductase, using light energy to abstract electrons from H(2)O, generating O(2) and a proton gradient subsequently used for ATP formation. In Lotus japonicus (Lotus corniculatus var. japonicus), this protein is Photosystem II CP47 reaction center protein.